The sequence spans 442 residues: MPDQIPVRDTIFALSSGSLPSGIAVIRISGADTRAVLERMAGGLSEARFAKLTSIYSAEREVLDRALCLFFPAPASFTGEDCAELHLHGGRAVVAAVLNELAAFPGLRMAEAGEFTKRAFLNGKMNLTEAEALSDLIAAETEAQRRFALVNSSDMRKRLYDGWRRRLIHARAMIEAELDFADESDVPGSAGATVWEDIRRLRQEIVEHASSYRKAEIIRDGFQIVILGAPNAGKSSLLNALARRDVAIVTEEPGTTRDILEVSLDIDGTKVVLADTAGIREAAGRVEALGIERSLRRANEADLVLLLEDVTNPSTPEVPQGKPVITIGNKADLITDTPAASYNCLISAKTGLGLDRLMELISQASAGYSNFAGEILPFRERHVALLGQAADALEAGIDGENIGLELRAECLRLSSLALGRISGEIDVEDLLDAIFSTFCIGK.

(6S)-5-formyl-5,6,7,8-tetrahydrofolate-binding residues include arginine 27, glutamate 84, and lysine 124. The region spanning 221-366 is the TrmE-type G domain; the sequence is GFQIVILGAP…LMELISQASA (146 aa). GTP is bound by residues 231-236, 250-256, 275-278, and 329-332; these read NAGKSS, TEEPGTT, DTAG, and NKAD. Mg(2+) contacts are provided by serine 235 and threonine 256. Residue lysine 442 coordinates (6S)-5-formyl-5,6,7,8-tetrahydrofolate.

The protein belongs to the TRAFAC class TrmE-Era-EngA-EngB-Septin-like GTPase superfamily. TrmE GTPase family. In terms of assembly, homodimer. Heterotetramer of two MnmE and two MnmG subunits. Requires K(+) as cofactor.

The protein resides in the cytoplasm. Functionally, exhibits a very high intrinsic GTPase hydrolysis rate. Involved in the addition of a carboxymethylaminomethyl (cmnm) group at the wobble position (U34) of certain tRNAs, forming tRNA-cmnm(5)s(2)U34. This is tRNA modification GTPase MnmE from Chelativorans sp. (strain BNC1).